The chain runs to 1781 residues: Chitin synthase 7 (1781 aa).

6 N-linked (GlcNAc...) asparagine glycosylation sites follow: asparagine 133, asparagine 534, asparagine 629, asparagine 644, asparagine 655, and asparagine 660. A run of 2 helical transmembrane segments spans residues 741-761 (AWVAFVWALTFWIPSPLLKFV) and 777-797 (LVLFFIILLLNGLIIFWIIGF). N-linked (GlcNAc...) asparagine glycosylation is found at asparagine 889 and asparagine 1011. The chain crosses the membrane as a helical span at residues 1048 to 1068 (LLLAFAIIICIVTAVKFLAAL). N-linked (GlcNAc...) asparagine glycosylation occurs at asparagine 1413. The next 3 membrane-spanning stretches (helical) occupy residues 1444-1464 (LTGTIILPSTTVYIGYLIYVL), 1471-1491 (IPYISLAMIGAVYGHQALIFI), and 1499-1519 (IGWMIIYILAFPIYSFILPLY). N-linked (GlcNAc...) asparagine glycosylation is present at asparagine 1526. The interval 1677-1712 (QANLSPAAGGGHSRSGTALGFSSGSRSPMPDAMRSQ) is disordered. A compositionally biased stretch (polar residues) spans 1690–1702 (RSGTALGFSSGSR). A DEK-C domain is found at 1723–1779 (GPTDMAIVESIRSVLCEVDLDTVTKKQVRALVEQRLQTELVGERRTFMDRQIDHELE).

The protein belongs to the chitin synthase family. Class V subfamily.

It localises to the cell membrane. The catalysed reaction is [(1-&gt;4)-N-acetyl-beta-D-glucosaminyl](n) + UDP-N-acetyl-alpha-D-glucosamine = [(1-&gt;4)-N-acetyl-beta-D-glucosaminyl](n+1) + UDP + H(+). In terms of biological role, polymerizes chitin, a structural polymer of the cell wall and septum, by transferring the sugar moiety of UDP-GlcNAc to the non-reducing end of the growing chitin polymer. Shows additive effects in septum formation with CHS1, CHS2, CHS3A, CHS4, CHS5 and CHS6. Indispensable for perithecia formation and regulates conidiation. Plays an important role in the response to cell wall stress. Also required for hyphal growth and pathogenicity. The protein is Chitin synthase 7 of Gibberella zeae (strain ATCC MYA-4620 / CBS 123657 / FGSC 9075 / NRRL 31084 / PH-1) (Wheat head blight fungus).